A 34-amino-acid polypeptide reads, in one-letter code: Photosystem II reaction center protein M (34 aa).

The helical transmembrane segment at Ile-5 to Ile-25 threads the bilayer.

It belongs to the PsbM family. As to quaternary structure, PSII is composed of 1 copy each of membrane proteins PsbA, PsbB, PsbC, PsbD, PsbE, PsbF, PsbH, PsbI, PsbJ, PsbK, PsbL, PsbM, PsbT, PsbX, PsbY, PsbZ, Psb30/Ycf12, at least 3 peripheral proteins of the oxygen-evolving complex and a large number of cofactors. It forms dimeric complexes.

It is found in the plastid. The protein resides in the chloroplast thylakoid membrane. Its function is as follows. One of the components of the core complex of photosystem II (PSII). PSII is a light-driven water:plastoquinone oxidoreductase that uses light energy to abstract electrons from H(2)O, generating O(2) and a proton gradient subsequently used for ATP formation. It consists of a core antenna complex that captures photons, and an electron transfer chain that converts photonic excitation into a charge separation. This subunit is found at the monomer-monomer interface. In Cenchrus americanus (Pearl millet), this protein is Photosystem II reaction center protein M.